We begin with the raw amino-acid sequence, 287 residues long: Phycobilisome 32.1 kDa linker polypeptide, phycocyanin-associated, rod (287 aa).

In terms of domain architecture, PBS-linker spans 2-180 (AITAAASRLG…LYRGYANSDR (179 aa)). The region spanning 235 to 287 (GRVYRIEVAGIRQPGYPGVRRSSTAFLVPYEQLSAKMQQLQRTGARIISVNPA) is the CpcD-like domain.

The protein belongs to the phycobilisome linker protein family.

The protein resides in the cellular thylakoid membrane. Its function is as follows. Rod linker protein, associated with phycocyanin. Linker polypeptides determine the state of aggregation and the location of the disk-shaped phycobiliprotein units within the phycobilisome and modulate their spectroscopic properties in order to mediate a directed and optimal energy transfer. The protein is Phycobilisome 32.1 kDa linker polypeptide, phycocyanin-associated, rod (cpcC) of Thermosynechococcus vestitus (strain NIES-2133 / IAM M-273 / BP-1).